The sequence spans 135 residues: 30 kDa antigenic glycoprotein (135 aa).

The first 5 residues, 1–5, serve as a signal peptide directing secretion; it reads GNTYS. N-linked (GlcNAc...) asparagine glycosylation is found at N22, N31, N57, and N73.

The protein to H.contortus 15 kDa excretory/secretory protein.

The protein resides in the secreted. The chain is 30 kDa antigenic glycoprotein from Trichostrongylus colubriformis (Black scour worm).